The chain runs to 356 residues: Chavicol O-methyltransferase (356 aa).

The S-adenosyl-L-methionine site is built by Gly-202, Asp-225, Asp-245, Met-246, and Lys-259. His-263 acts as the Proton acceptor in catalysis.

This sequence belongs to the class I-like SAM-binding methyltransferase superfamily. Cation-independent O-methyltransferase family. COMT subfamily. As to quaternary structure, homodimer. Specifically expressed in the peltate glandular trichomes on the surface of the young basil leaves.

The enzyme catalyses (E)-isoeugenol + S-adenosyl-L-methionine = (E)-isomethyleugenol + S-adenosyl-L-homocysteine + H(+). It participates in aromatic compound metabolism; phenylpropanoid biosynthesis. In terms of biological role, phenylpropene O-methyltransferase that catalyzes the methylation of the para-4-hydroxyl of chavicol to methylchavicol. Can also convert eugenol to methyleugenol but with less affinity. The polypeptide is Chavicol O-methyltransferase (CVOMT1) (Ocimum basilicum (Sweet basil)).